Here is a 367-residue protein sequence, read N- to C-terminus: Undecaprenyl-phosphate alpha-N-acetylglucosaminyl 1-phosphate transferase (367 aa).

9 helical membrane-spanning segments follow: residues 3-23 (LLTA…FIFL), 45-65 (GVIP…MFGL), 69-89 (YIPH…VGAM), 129-149 (WELV…WAAI), 158-178 (IDGL…LILW), 187-207 (MWCF…LGIL), 213-233 (VFMG…LLLE), 242-262 (ISPV…VAIM), and 318-338 (VPEW…GYCI).

Belongs to the glycosyltransferase 4 family. WecA subfamily. The cofactor is Mg(2+). It depends on Mn(2+) as a cofactor.

It localises to the cell inner membrane. It carries out the reaction di-trans,octa-cis-undecaprenyl phosphate + UDP-N-acetyl-alpha-D-glucosamine = N-acetyl-alpha-D-glucosaminyl-di-trans,octa-cis-undecaprenyl diphosphate + UMP. It functions in the pathway bacterial outer membrane biogenesis; LPS O-antigen biosynthesis. Its pathway is bacterial outer membrane biogenesis; enterobacterial common antigen biosynthesis. Its function is as follows. Catalyzes the transfer of the GlcNAc-1-phosphate moiety from UDP-GlcNAc onto the carrier lipid undecaprenyl phosphate (C55-P), yielding GlcNAc-pyrophosphoryl-undecaprenyl (GlcNAc-PP-C55). In Salmonella typhi, this protein is Undecaprenyl-phosphate alpha-N-acetylglucosaminyl 1-phosphate transferase.